Consider the following 116-residue polypeptide: Large ribosomal subunit protein bL17 (116 aa).

It belongs to the bacterial ribosomal protein bL17 family. In terms of assembly, part of the 50S ribosomal subunit. Contacts protein L32.

In Prochlorococcus marinus (strain NATL2A), this protein is Large ribosomal subunit protein bL17.